The following is a 342-amino-acid chain: Ribosomal RNA small subunit methyltransferase H (342 aa).

S-adenosyl-L-methionine is bound by residues 42-44, Asp-61, Phe-88, Asp-119, and Gln-126; that span reads GGH.

Belongs to the methyltransferase superfamily. RsmH family.

The protein resides in the cytoplasm. It carries out the reaction cytidine(1402) in 16S rRNA + S-adenosyl-L-methionine = N(4)-methylcytidine(1402) in 16S rRNA + S-adenosyl-L-homocysteine + H(+). In terms of biological role, specifically methylates the N4 position of cytidine in position 1402 (C1402) of 16S rRNA. In Corynebacterium jeikeium (strain K411), this protein is Ribosomal RNA small subunit methyltransferase H.